A 147-amino-acid polypeptide reads, in one-letter code: Cytochrome c-type biogenesis protein CcmE (147 aa).

Topologically, residues 1-7 (MTRKQKR) are cytoplasmic. Residues 8–28 (LSVIVGGLAFLGAATGLTFYA) form a helical; Signal-anchor for type II membrane protein membrane-spanning segment. Residues 29-147 (LGQKASYFYM…KGVWQESKSE (119 aa)) are Periplasmic-facing. Heme contacts are provided by His122 and Tyr126.

Belongs to the CcmE/CycJ family.

Its subcellular location is the cell inner membrane. Heme chaperone required for the biogenesis of c-type cytochromes. Transiently binds heme delivered by CcmC and transfers the heme to apo-cytochromes in a process facilitated by CcmF and CcmH. This is Cytochrome c-type biogenesis protein CcmE from Mesorhizobium japonicum (strain LMG 29417 / CECT 9101 / MAFF 303099) (Mesorhizobium loti (strain MAFF 303099)).